We begin with the raw amino-acid sequence, 626 residues long: Putative Xaa-Pro dipeptidyl-peptidase (626 aa).

Active-site charge relay system residues include serine 231, aspartate 348, and histidine 379.

Belongs to the peptidase S15 family.

The catalysed reaction is Hydrolyzes Xaa-Pro-|- bonds to release unblocked, N-terminal dipeptides from substrates including Ala-Pro-|-p-nitroanilide and (sequentially) Tyr-Pro-|-Phe-Pro-|-Gly-Pro-|-Ile.. The polypeptide is Putative Xaa-Pro dipeptidyl-peptidase (Rhodopirellula baltica (strain DSM 10527 / NCIMB 13988 / SH1)).